A 139-amino-acid polypeptide reads, in one-letter code: uncharacterized protein (139 aa).

Transmembrane regions (helical) follow at residues 35 to 55 (LVFL…SFLI) and 57 to 77 (FGIL…LTVI).

The protein resides in the membrane. This is an uncharacterized protein from Saccharomyces cerevisiae (strain ATCC 204508 / S288c) (Baker's yeast).